We begin with the raw amino-acid sequence, 234 residues long: Carboxy-S-adenosyl-L-methionine synthase (234 aa).

S-adenosyl-L-methionine-binding positions include Tyr-35, 60–62 (GCS), 83–84 (DN), and Arg-191.

This sequence belongs to the class I-like SAM-binding methyltransferase superfamily. Cx-SAM synthase family. Homodimer.

The enzyme catalyses prephenate + S-adenosyl-L-methionine = carboxy-S-adenosyl-L-methionine + 3-phenylpyruvate + H2O. Catalyzes the conversion of S-adenosyl-L-methionine (SAM) to carboxy-S-adenosyl-L-methionine (Cx-SAM). The sequence is that of Carboxy-S-adenosyl-L-methionine synthase from Campylobacter lari (strain RM2100 / D67 / ATCC BAA-1060).